A 620-amino-acid polypeptide reads, in one-letter code: MLNGEDFVEHNDILSSPAKSRNVTPKRVDPHGERQLRRIHSSKKNLLERISLVGNERKNTSPDPALKPKTPSKAPRKRGRPRKIQEELTDRIKKDEKDTISSKKKRKLDKDTSGNVNEESKTSNNKQVMEKTGIKEKREREKIQVATTTYEDNVTPQTDDNFVSNSPEPPEPATPSKKSLTTNHDFTSPLKQIIMNNLKEYKDSTSPGKLTLSRNFTPTPVPKNKKLYQTSETKSASSFLDTFEGYFDQRKIVRTNAKSRHTMSMAPDVTREEFSLVSNFFNENFQKRPRQKLFEIQKKMFPQYWFELTQGFSLLFYGVGSKRNFLEEFAIDYLSPKIAYSQLAYENELQQNKPVNSIPCLILNGYNPSCNYRDVFKEITDLLVPAELTRSETKYWGNHVILQIQKMIDFYKNQPLDIKLILVVHNLDGPSIRKNTFQTMLSFLSVIRQIAIVASTDHIYAPLLWDNMKAQNYNFVFHDISNFEPSTVESTFQDVMKMGKSDTSSGAEGAKYVLQSLTVNSKKMYKLLIETQMQNMGNLSANTGPKRGTQRTGVELKLFNHLCAADFIASNEIALRSMLREFIEHKMANITKNNSGMEIIWVPYTYAELEKLLKTVLNTL.

A disordered region spans residues 1–184 (MLNGEDFVEH…PSKKSLTTNH (184 aa)). A compositionally biased stretch (polar residues) spans 13–23 (ILSSPAKSRNV). Basic and acidic residues predominate over residues 26-36 (KRVDPHGERQL). Position 60 is a phosphothreonine (threonine 60). Positions 83-101 (KIQEELTDRIKKDEKDTIS) are enriched in basic and acidic residues. A compositionally biased stretch (polar residues) spans 113 to 127 (SGNVNEESKTSNNKQ). Residues 128–143 (VMEKTGIKEKREREKI) are compositionally biased toward basic and acidic residues. Residues 145-166 (VATTTYEDNVTPQTDDNFVSNS) are compositionally biased toward polar residues. A Phosphothreonine modification is found at threonine 187. Serine 188 carries the post-translational modification Phosphoserine. The span at 204–218 (STSPGKLTLSRNFTP) shows a compositional bias: polar residues. A disordered region spans residues 204-225 (STSPGKLTLSRNFTPTPVPKNK).

Belongs to the ORC2 family. Component of the origin recognition complex (ORC) composed of at least ORC1, ORC2, ORC3, ORC4, ORC5 and ORC6. Interacts with MCM10 and TAH11.

It localises to the nucleus. Component of the origin recognition complex (ORC) that binds origins of replication. It has a role in both chromosomal replication and mating type transcriptional silencing. Binds to the ARS consensus sequence (ACS) of origins of replication. In Saccharomyces cerevisiae (strain ATCC 204508 / S288c) (Baker's yeast), this protein is Origin recognition complex subunit 2 (ORC2).